Reading from the N-terminus, the 460-residue chain is Cysteine--tRNA ligase (460 aa).

Position 28 (C28) interacts with Zn(2+). The short motif at 30 to 40 is the 'HIGH' region element; it reads MTVYDYCHLGH. Zn(2+) contacts are provided by C209, H234, and E238. The short motif at 266–270 is the 'KMSKS' region element; that stretch reads KMSKS. An ATP-binding site is contributed by K269.

It belongs to the class-I aminoacyl-tRNA synthetase family. Monomer. Requires Zn(2+) as cofactor.

Its subcellular location is the cytoplasm. The enzyme catalyses tRNA(Cys) + L-cysteine + ATP = L-cysteinyl-tRNA(Cys) + AMP + diphosphate. The polypeptide is Cysteine--tRNA ligase (Pseudomonas syringae pv. tomato (strain ATCC BAA-871 / DC3000)).